The following is a 217-amino-acid chain: 3-demethoxyubiquinol 3-hydroxylase (217 aa).

Glu66, Glu96, His99, Glu148, Glu180, and His183 together coordinate Fe cation.

Belongs to the COQ7 family. It depends on Fe cation as a cofactor.

The protein resides in the cell membrane. The enzyme catalyses a 5-methoxy-2-methyl-3-(all-trans-polyprenyl)benzene-1,4-diol + AH2 + O2 = a 3-demethylubiquinol + A + H2O. Its pathway is cofactor biosynthesis; ubiquinone biosynthesis. In terms of biological role, catalyzes the hydroxylation of 2-nonaprenyl-3-methyl-6-methoxy-1,4-benzoquinol during ubiquinone biosynthesis. This chain is 3-demethoxyubiquinol 3-hydroxylase, found in Xylella fastidiosa (strain 9a5c).